The sequence spans 125 residues: Large ribosomal subunit protein bL12 (125 aa).

The protein belongs to the bacterial ribosomal protein bL12 family. As to quaternary structure, homodimer. Part of the ribosomal stalk of the 50S ribosomal subunit. Forms a multimeric L10(L12)X complex, where L10 forms an elongated spine to which 2 to 4 L12 dimers bind in a sequential fashion. Binds GTP-bound translation factors.

Forms part of the ribosomal stalk which helps the ribosome interact with GTP-bound translation factors. Is thus essential for accurate translation. This chain is Large ribosomal subunit protein bL12, found in Delftia acidovorans (strain DSM 14801 / SPH-1).